Consider the following 273-residue polypeptide: Undecaprenyl-diphosphatase (273 aa).

A run of 7 helical transmembrane segments spans residues 6 to 26 (SLLI…LPVS), 45 to 65 (AKTF…VMFW), 90 to 110 (LTLI…LLFH), 116 to 136 (LFNP…LIAA), 190 to 210 (YAAS…ATAL), 222 to 242 (GDIP…LIAI), and 252 to 272 (ISFI…YVVF).

This sequence belongs to the UppP family.

The protein localises to the cell inner membrane. It carries out the reaction di-trans,octa-cis-undecaprenyl diphosphate + H2O = di-trans,octa-cis-undecaprenyl phosphate + phosphate + H(+). Its function is as follows. Catalyzes the dephosphorylation of undecaprenyl diphosphate (UPP). Confers resistance to bacitracin. This chain is Undecaprenyl-diphosphatase, found in Escherichia coli O127:H6 (strain E2348/69 / EPEC).